The following is an 829-amino-acid chain: FAST kinase domain-containing protein 1, mitochondrial (829 aa).

Lysine 346 is modified (N6-acetyllysine). Residues 761–821 enclose the RAP domain; it reads IAIELLDVRA…KDARMDYLRE (61 aa).

It belongs to the FAST kinase family. In terms of tissue distribution, expression detected in spleen, testis, colon, heart, smooth muscle, kidney, brain, lung, liver, brown and white adipose tissue with highest expression in heart and brown adipose tissue.

It localises to the mitochondrion. Functionally, involved in the down-regulation of mitochondrial MT-ND3 mRNA levels which leads to decreased respiratory complex I abundance and activity. The protein is FAST kinase domain-containing protein 1, mitochondrial (Fastkd1) of Mus musculus (Mouse).